An 81-amino-acid chain; its full sequence is Cytochrome c oxidase subunit 7B2, mitochondrial (81 aa).

The N-terminal 25 residues, 1 to 25 (MMFPLARNALSSLKIQSILQSMARH), are a transit peptide targeting the mitochondrion. At 26 to 33 (SHVKHSPD) the chain is on the mitochondrial matrix side. A helical transmembrane segment spans residues 34 to 60 (FHDKYGNAVLASGTAFCVATWVFTATQ). At 61–81 (IGIEWNLSPVGRVTPKEWKHQ) the chain is on the mitochondrial intermembrane side.

The protein belongs to the cytochrome c oxidase VIIb family. Component of the cytochrome c oxidase (complex IV, CIV), a multisubunit enzyme composed of 14 subunits. The complex is composed of a catalytic core of 3 subunits MT-CO1, MT-CO2 and MT-CO3, encoded in the mitochondrial DNA, and 11 supernumerary subunits COX4I, COX5A, COX5B, COX6A, COX6B, COX6C, COX7A, COX7B, COX7C, COX8 and NDUFA4, which are encoded in the nuclear genome. The complex exists as a monomer or a dimer and forms supercomplexes (SCs) in the inner mitochondrial membrane with NADH-ubiquinone oxidoreductase (complex I, CI) and ubiquinol-cytochrome c oxidoreductase (cytochrome b-c1 complex, complex III, CIII), resulting in different assemblies (supercomplex SCI(1)III(2)IV(1) and megacomplex MCI(2)III(2)IV(2)).

The protein resides in the mitochondrion inner membrane. It participates in energy metabolism; oxidative phosphorylation. In terms of biological role, component of the cytochrome c oxidase, the last enzyme in the mitochondrial electron transport chain which drives oxidative phosphorylation. The respiratory chain contains 3 multisubunit complexes succinate dehydrogenase (complex II, CII), ubiquinol-cytochrome c oxidoreductase (cytochrome b-c1 complex, complex III, CIII) and cytochrome c oxidase (complex IV, CIV), that cooperate to transfer electrons derived from NADH and succinate to molecular oxygen, creating an electrochemical gradient over the inner membrane that drives transmembrane transport and the ATP synthase. Cytochrome c oxidase is the component of the respiratory chain that catalyzes the reduction of oxygen to water. Electrons originating from reduced cytochrome c in the intermembrane space (IMS) are transferred via the dinuclear copper A center (CU(A)) of subunit 2 and heme A of subunit 1 to the active site in subunit 1, a binuclear center (BNC) formed by heme A3 and copper B (CU(B)). The BNC reduces molecular oxygen to 2 water molecules using 4 electrons from cytochrome c in the IMS and 4 protons from the mitochondrial matrix. This is Cytochrome c oxidase subunit 7B2, mitochondrial (COX7B2) from Homo sapiens (Human).